We begin with the raw amino-acid sequence, 434 residues long: Trigger factor (434 aa).

The region spanning 160–245 (GDKVKMNFVG…LTEVLAANLP (86 aa)) is the PPIase FKBP-type domain.

Belongs to the FKBP-type PPIase family. Tig subfamily.

Its subcellular location is the cytoplasm. It catalyses the reaction [protein]-peptidylproline (omega=180) = [protein]-peptidylproline (omega=0). Its function is as follows. Involved in protein export. Acts as a chaperone by maintaining the newly synthesized protein in an open conformation. Functions as a peptidyl-prolyl cis-trans isomerase. The protein is Trigger factor of Shewanella sp. (strain MR-4).